Here is a 614-residue protein sequence, read N- to C-terminus: Dihydroxy-acid dehydratase (614 aa).

Mg(2+) is bound at residue D81. C122 serves as a coordination point for [2Fe-2S] cluster. Residues D123 and K124 each contribute to the Mg(2+) site. N6-carboxylysine is present on K124. Residue C195 coordinates [2Fe-2S] cluster. E491 provides a ligand contact to Mg(2+). S517 (proton acceptor) is an active-site residue.

Belongs to the IlvD/Edd family. In terms of assembly, homodimer. Requires [2Fe-2S] cluster as cofactor. The cofactor is Mg(2+).

It catalyses the reaction (2R)-2,3-dihydroxy-3-methylbutanoate = 3-methyl-2-oxobutanoate + H2O. The enzyme catalyses (2R,3R)-2,3-dihydroxy-3-methylpentanoate = (S)-3-methyl-2-oxopentanoate + H2O. Its pathway is amino-acid biosynthesis; L-isoleucine biosynthesis; L-isoleucine from 2-oxobutanoate: step 3/4. It participates in amino-acid biosynthesis; L-valine biosynthesis; L-valine from pyruvate: step 3/4. Its function is as follows. Functions in the biosynthesis of branched-chain amino acids. Catalyzes the dehydration of (2R,3R)-2,3-dihydroxy-3-methylpentanoate (2,3-dihydroxy-3-methylvalerate) into 2-oxo-3-methylpentanoate (2-oxo-3-methylvalerate) and of (2R)-2,3-dihydroxy-3-methylbutanoate (2,3-dihydroxyisovalerate) into 2-oxo-3-methylbutanoate (2-oxoisovalerate), the penultimate precursor to L-isoleucine and L-valine, respectively. This is Dihydroxy-acid dehydratase from Actinobacillus succinogenes (strain ATCC 55618 / DSM 22257 / CCUG 43843 / 130Z).